The primary structure comprises 898 residues: MRKGVLKDPEIAELFFKEDPEELFIDLHEIGHGSFGAVYFATNAHTNEVVAIKKMSYSGKQTHEKWQDILKEVRFLQQLKHPNTIEYKGCYLKEHTAWLVMEYCLGSASDLLEVHKKPLQEVEIAAITHGALQGLAYLHFHSLIHRDIKAGNILLTEPGQVKLADFGSASMASPANSFVGTPYWMAPEVILAMDEGQYDGKVDIWSLGITCIELAERKPPLFNMNAMSALYHIAQNDSPTLQSREWTDSFRRFVDYCLHKIPQERPAAAELLRHDFIRRERPPRVLIDLIQRTKDAVRELDNLQYRKMKKILFQETRNGPLNESQEEEEDSEQGSNLNREVDSLGSIHSIPSVSVSTGSRSSSVNSMQEVMDEGSPELVMMQEDEGTVNSSSSMVHKKDHVFVRDEAGHGDPRPEPRPTQSVQSRALHYRNRERFATIKSASLVTRQIHEHEQENELREQMSGYKRMRRQHQKQLIALENKLKAEMDEHRLKLQKEVETHANNSSIELEKLAKKQVATIEKEAKVAAADEKKFQQQILAQQKKDLTTFLESQKKQYKICKEKIKEEMNEDHSTPKKEKQERISKHKENLQHTQAEEEAHLLTQQRLYYDRNCRCFKRKIMTKRHEVEQQNIREELNKKRTQKEMEHAMLIRHDESTRELEYRQLHTLQKLRMDLIRLQHQTELENQLEYNKRRERELHRKHVMELRQQPKNLKAMEMQIKKQFQDTCKVQTKQYKALKNHQLEVTPKNEHKAILKTLKEEQTRKLAILAEQYEQSINEMMASQALRLDEAQEAECQALRLQLQQEMELLNAYQSKIKMQTEAQHERELQKLEQRVSLRRAHLEQKIEEELAALQKERSERIKTLLERQERETETFDMESLRMGFGNLVTLDFPKEDYR.

A Protein kinase domain is found at 24 to 277 (FIDLHEIGHG…AAELLRHDFI (254 aa)). Residues 30–38 (IGHGSFGAV) and K53 contribute to the ATP site. D147 acts as the Proton acceptor in catalysis. Disordered stretches follow at residues 316–372 (TRNG…EVMD) and 405–424 (DEAG…SVQS). A phosphoserine mark is found at S324, S331, S343, S346, and S349. Positions 349–366 (SIPSVSVSTGSRSSSVNS) are enriched in low complexity. T357 is subject to Phosphothreonine. Residue S359 is modified to Phosphoserine. Over residues 405–416 (DEAGHGDPRPEP) the composition is skewed to basic and acidic residues. S442 is modified (phosphoserine). Coiled-coil stretches lie at residues 452–502 (EQEN…THAN), 548–649 (FLES…HAML), and 753–871 (ILKT…QERE). The disordered stretch occupies residues 565 to 596 (EEMNEDHSTPKKEKQERISKHKENLQHTQAEE). An N6-acetyllysine modification is found at K830.

This sequence belongs to the protein kinase superfamily. STE Ser/Thr protein kinase family. STE20 subfamily. Self-associates. Interacts with ERN1 and TRAF2. Interaction with TRAF2 is facilitated under ER stress conditions, such as treatment with tunicamycin, and may promote TRAF2 phosphorylation. Interacts (via N-terminus) with STK25; the interaction promotes STK25 abundance at the level of protein expression and/or stability. Autophosphorylated. Phosphorylation at Ser-324 by ATM following DNA damage is required for activation of the p38/MAPK14 stress-activated MAPK cascade. Phosphorylated at Ser-324 and on Tyr residues during T cell activation. Phosphorylated by LRRK2. As to expression, ubiquitously expressed, with a higher expression in the retina.

It localises to the cytoplasm. Its subcellular location is the cell membrane. The protein localises to the membrane raft. The protein resides in the lipid droplet. The enzyme catalyses L-seryl-[protein] + ATP = O-phospho-L-seryl-[protein] + ADP + H(+). It carries out the reaction L-threonyl-[protein] + ATP = O-phospho-L-threonyl-[protein] + ADP + H(+). Serine/threonine-protein kinase that acts as a regulator of the p38/MAPK14 stress-activated MAPK cascade and of the MAPK8/JNK cascade. In response to DNA damage, involved in the G2/M transition DNA damage checkpoint by activating the p38/MAPK14 stress-activated MAPK cascade, probably by mediating phosphorylation of upstream MAP2K3 and MAP2K6 kinases. Inhibits basal activity of the MAPK8/JNK cascade and diminishes its activation in response to epidermal growth factor (EGF). Positively regulates canonical T cell receptor (TCR) signaling by preventing early PTPN6/SHP1-mediated inactivation of LCK, ensuring sustained TCR signaling that is required for optimal activation and differentiation of T cells. Phosphorylates PTPN6/SHP1 on 'Thr-396', leading to its polyubiquitination and subsequent proteasomal degradation. Required for cell surface expression of metalloprotease ADAM10 on type 1 transitional B cells which is necessary for their NOTCH-mediated development into marginal zone B cells. Also required for the NOTCH-mediated terminal differentiation of splenic conventional type 2 dendritic cells. Positively regulates osteoblast differentiation by acting as an upstream activator of the JNK pathway. Promotes JNK signaling in hepatocytes and positively regulates hepatocyte lipid storage by inhibiting beta-oxidation and triacylglycerol secretion while enhancing lipid synthesis. Restricts age-associated inflammation by negatively regulating differentiation of macrophages and their production of pro-inflammatory cytokines. Plays a role in negatively regulating the abundance of regulatory T cells in white adipose tissue. The polypeptide is Serine/threonine-protein kinase TAO3 (Taok3) (Rattus norvegicus (Rat)).